The primary structure comprises 284 residues: RNA polymerase sigma factor RpoH (284 aa).

The sigma-70 factor domain-2 stretch occupies residues 53–122 (LILSHLRFVV…IHEYVLRNWR (70 aa)). The short motif at 77–80 (DLIQ) is the Interaction with polymerase core subunit RpoC element. Residues 228-280 (AMQGLDERSQDIIRARWLDEDNKSTLQELADRYGVSAERVRQLEKNAMKKLRA) are sigma-70 factor domain-4. A DNA-binding region (H-T-H motif) is located at residues 253–272 (LQELADRYGVSAERVRQLEK).

This sequence belongs to the sigma-70 factor family. RpoH subfamily. In terms of assembly, interacts with the RNA polymerase core enzyme.

It is found in the cytoplasm. Its function is as follows. Sigma factors are initiation factors that promote the attachment of RNA polymerase to specific initiation sites and are then released. This sigma factor is involved in regulation of expression of heat shock genes. The protein is RNA polymerase sigma factor RpoH of Escherichia coli O6:H1 (strain CFT073 / ATCC 700928 / UPEC).